The primary structure comprises 481 residues: MKMTDFNTQQANNLSEHVSKKEAEMAEVLAKIVRDKYQWVAERKASQHLSTFQSDLLPSDRSFYDALSGDKTVFITECKKASPSKGLIRNDFDLDYIASVYNNYADAISVLTDEKYFQGSFDFLPQVRRQVKQPVLCKDFMVDTYQVYLARHYGADAVLLMLSVLNDEEYKALEEAAHSLNMGILTEVSNEEELHRAVQLGARVIGINNRNLRDLTTDLNRTKALAPTIRKLAPNATVISESGIYTHQQVRDLAEYADGFLIGSSLMAEDNLELAVRKVTLGENKVCGLTHPDDAAKAYQAGAVFGGLIFVEKSKRAVDFESARLTMSGAPLNYVGVFQNHDVDYVASIVTSLGLKAVQLHGLEDQEYVNQLKTELPVGVEIWKAYGVADTKPSLLADNIDRHLLDAQVGTQTGGTGHVFDWSLIGDPSQIMLAGGLSPENAQQAAKLGCLGLDLNSGVESAPGKKDSQKLQAAFHAIRNY.

The indole-3-glycerol phosphate synthase stretch occupies residues 1–283 (MKMTDFNTQQ…LAVRKVTLGE (283 aa)). The segment at 284-481 (NKVCGLTHPD…QAAFHAIRNY (198 aa)) is N-(5'-phosphoribosyl)anthranilate isomerase.

It in the N-terminal section; belongs to the TrpC family. The protein in the C-terminal section; belongs to the TrpF family. In terms of assembly, monomer.

It catalyses the reaction N-(5-phospho-beta-D-ribosyl)anthranilate = 1-(2-carboxyphenylamino)-1-deoxy-D-ribulose 5-phosphate. The catalysed reaction is 1-(2-carboxyphenylamino)-1-deoxy-D-ribulose 5-phosphate + H(+) = (1S,2R)-1-C-(indol-3-yl)glycerol 3-phosphate + CO2 + H2O. Its pathway is amino-acid biosynthesis; L-tryptophan biosynthesis; L-tryptophan from chorismate: step 3/5. The protein operates within amino-acid biosynthesis; L-tryptophan biosynthesis; L-tryptophan from chorismate: step 4/5. Its function is as follows. Bifunctional enzyme that catalyzes two sequential steps of tryptophan biosynthetic pathway. The first reaction is catalyzed by the isomerase, coded by the TrpF domain; the second reaction is catalyzed by the synthase, coded by the TrpC domain. This Vibrio parahaemolyticus serotype O3:K6 (strain RIMD 2210633) protein is Tryptophan biosynthesis protein TrpCF (trpC).